Consider the following 399-residue polypeptide: MATTLATDVRLSIAHQTRFALRLRSAISSNPERAAGNVAFSPLSLHVALSLITAGAAATRDQLVAILGDGGAGDAKELNALAEQVVQFVLANESSTGGPRIAFANGIFVDASLSLKPSFEELAVCQYKAKTQSVDFQHKTLEAVGQVNSWVEQVTTGLIKQILPPGSVDNTTKLILGNALYFKGAWDQKFDESNTKCDSFHLLDGSSIQTQFMSSTKKQYISSSDNLKVLKLPYAKGHDKRQFSMYILLPGAQDGLWSLAKRLSTEPEFIENHIPKQTVEVGRFQLPKFKISYQFEASSLLRALGLQLPFSEEADLSEMVDSSQGLEISHVFHKSFVEVNEEGTEAGAATVAMGVAMSMPLKVDLVDFVANHPFLFLIREDIAGVVVFVGHVTNPLISA.

A signal for targeting protein Z4 into the ER lumen region spans residues 36-56 (GNVAFSPLSLHVALSLITAGA). The RCL stretch occupies residues 343-367 (GTEAGAATVAMGVAMSMPLKVDLVD).

It belongs to the serpin family. As to expression, highly expressed in embryo and endosperm. Is accumulated and stored in the endosperm, where it exists in a free and a bound form. Expressed in roots, coleoptiles, shoots and leaves.

Its function is as follows. A major component of the endosperm albumin, this protein acts as a storage protein during grain filling, contributing a substantial part of the grain's lysine. May have an inhibitory function during filling or germination. Inhibits cathepsin G in vitro. The chain is Serpin-Z4 (PAZ1) from Hordeum vulgare (Barley).